We begin with the raw amino-acid sequence, 376 residues long: UDP-N-acetylglucosamine--N-acetylmuramyl-(pentapeptide) pyrophosphoryl-undecaprenol N-acetylglucosamine transferase (376 aa).

UDP-N-acetyl-alpha-D-glucosamine is bound by residues 11 to 13 (TGG), asparagine 117, arginine 160, serine 208, and glutamine 310.

It belongs to the glycosyltransferase 28 family. MurG subfamily.

Its subcellular location is the cell inner membrane. The catalysed reaction is di-trans,octa-cis-undecaprenyl diphospho-N-acetyl-alpha-D-muramoyl-L-alanyl-D-glutamyl-meso-2,6-diaminopimeloyl-D-alanyl-D-alanine + UDP-N-acetyl-alpha-D-glucosamine = di-trans,octa-cis-undecaprenyl diphospho-[N-acetyl-alpha-D-glucosaminyl-(1-&gt;4)]-N-acetyl-alpha-D-muramoyl-L-alanyl-D-glutamyl-meso-2,6-diaminopimeloyl-D-alanyl-D-alanine + UDP + H(+). Its pathway is cell wall biogenesis; peptidoglycan biosynthesis. Functionally, cell wall formation. Catalyzes the transfer of a GlcNAc subunit on undecaprenyl-pyrophosphoryl-MurNAc-pentapeptide (lipid intermediate I) to form undecaprenyl-pyrophosphoryl-MurNAc-(pentapeptide)GlcNAc (lipid intermediate II). In Rickettsia conorii (strain ATCC VR-613 / Malish 7), this protein is UDP-N-acetylglucosamine--N-acetylmuramyl-(pentapeptide) pyrophosphoryl-undecaprenol N-acetylglucosamine transferase.